Consider the following 211-residue polypeptide: Large ribosomal subunit protein uL3 (211 aa).

Position 150 is an N5-methylglutamine (Q150).

The protein belongs to the universal ribosomal protein uL3 family. As to quaternary structure, part of the 50S ribosomal subunit. Forms a cluster with proteins L14 and L19. Post-translationally, methylated by PrmB.

Its function is as follows. One of the primary rRNA binding proteins, it binds directly near the 3'-end of the 23S rRNA, where it nucleates assembly of the 50S subunit. This chain is Large ribosomal subunit protein uL3, found in Stutzerimonas stutzeri (strain A1501) (Pseudomonas stutzeri).